Consider the following 620-residue polypeptide: 1-deoxy-D-xylulose-5-phosphate synthase (620 aa).

Thiamine diphosphate-binding positions include His-75 and 116-118 (AHS). A Mg(2+)-binding site is contributed by Asp-147. Residues 148–149 (GA), Asn-177, Tyr-284, and Glu-366 each bind thiamine diphosphate. Asn-177 is a binding site for Mg(2+).

Belongs to the transketolase family. DXPS subfamily. In terms of assembly, homodimer. Mg(2+) is required as a cofactor. It depends on thiamine diphosphate as a cofactor.

The catalysed reaction is D-glyceraldehyde 3-phosphate + pyruvate + H(+) = 1-deoxy-D-xylulose 5-phosphate + CO2. It participates in metabolic intermediate biosynthesis; 1-deoxy-D-xylulose 5-phosphate biosynthesis; 1-deoxy-D-xylulose 5-phosphate from D-glyceraldehyde 3-phosphate and pyruvate: step 1/1. In terms of biological role, catalyzes the acyloin condensation reaction between C atoms 2 and 3 of pyruvate and glyceraldehyde 3-phosphate to yield 1-deoxy-D-xylulose-5-phosphate (DXP). This chain is 1-deoxy-D-xylulose-5-phosphate synthase, found in Bordetella bronchiseptica (strain ATCC BAA-588 / NCTC 13252 / RB50) (Alcaligenes bronchisepticus).